Here is a 510-residue protein sequence, read N- to C-terminus: Dolichyl-P-Man:Man5GlcNAc2-PP-dolichol alpha-1,3-mannosyltransferase Alg3 (510 aa).

Residues 1–43 (MAPPKAASHRPAVRRKKSGTLVDSILDKYLNVRFFKYLLLEPA) lie on the Cytoplasmic side of the membrane. A helical membrane pass occupies residues 44 to 64 (ALPIVGLFVLLAELVINVVVI). Residues 65-97 (QRVPYTEIDWVAYMQECEGFLNGTTNYSLLRGD) lie on the Lumenal side of the membrane. A helical membrane pass occupies residues 98-118 (TGPLVYPAAFVYIYSALYYVT). Residues 119-125 (SHGTNVR) are Cytoplasmic-facing. Residues 126 to 146 (LAQYIFAGIYLLQLALVLRLY) traverse the membrane as a helical segment. Residues 147 to 171 (SKSRKVPPYVLVLSAFTSYRIHSIY) are Lumenal-facing. The chain crosses the membrane as a helical span at residues 172-192 (VLRLFNDPVAVLLLYAALNLF). Residues 193 to 211 (LDRRWTLGSTFFSLAVGVK) are Cytoplasmic-facing. A helical transmembrane segment spans residues 212 to 232 (MNILLFAPALLLFYLANLGLL). Position 233 (arginine 233) is a topological domain, lumenal. A helical membrane pass occupies residues 234-254 (TILQLAVCGVIQLLLGAPFLL). At 255-294 (THPVEYLRGSFDLGRIFEHKWTVNYRFLSRDVFENRTFHV) the chain is on the cytoplasmic side. Residues 295 to 315 (SLLGLHLLLLLAFAKPIWTFF) form a helical membrane-spanning segment. Residues 316-403 (QSYVRLRRIE…YGIHFDRCTQ (88 aa)) are Lumenal-facing. The tract at residues 337–358 (LQLKAQKRPKKVEKDKDKDQKK) is disordered. Residues 348 to 358 (VEKDKDKDQKK) show a composition bias toward basic and acidic residues. A helical membrane pass occupies residues 404–424 (LALLPFFLCNLVGVACSRSLH). Residues 425–426 (YQ) are Cytoplasmic-facing. A helical membrane pass occupies residues 427 to 447 (FYVWYFHSLPYLAWSTPYSLG). Over 448–464 (VRCLILGLIEYCWNTYP) the chain is Lumenal. A helical membrane pass occupies residues 465 to 485 (STNFSSAALHFTHIILLAGVA). Over 486–510 (KQLIQTMRINNAAKREQQEQQKKLQ) the chain is Cytoplasmic.

The protein belongs to the glycosyltransferase ALG3 family.

The protein localises to the endoplasmic reticulum membrane. It carries out the reaction an alpha-D-Man-(1-&gt;2)-alpha-D-Man-(1-&gt;2)-alpha-D-Man-(1-&gt;3)-[alpha-D-Man-(1-&gt;6)]-beta-D-Man-(1-&gt;4)-beta-D-GlcNAc-(1-&gt;4)-alpha-D-GlcNAc-diphospho-di-trans,poly-cis-dolichol + a di-trans,poly-cis-dolichyl beta-D-mannosyl phosphate = an alpha-D-Man-(1-&gt;2)-alpha-D-Man-(1-&gt;2)-alpha-D-Man-(1-&gt;3)-[alpha-D-Man-(1-&gt;3)-alpha-D-Man-(1-&gt;6)]-beta-D-Man-(1-&gt;4)-beta-D-GlcNAc-(1-&gt;4)-alpha-D-GlcNAc-diphospho-di-trans,poly-cis-dolichol + a di-trans,poly-cis-dolichyl phosphate + H(+). Its pathway is protein modification; protein glycosylation. Functionally, probable alpha-1,3-mannosyltransferase involved in the N-glycosylation pathway. Involved in glycosylation of the TNF receptor grnd, regulating its ligand affinity. Required for normal epithelial growth and architecture. Suppressor of JNK-dependent intestinal stem cell proliferation. This chain is Dolichyl-P-Man:Man5GlcNAc2-PP-dolichol alpha-1,3-mannosyltransferase Alg3, found in Drosophila melanogaster (Fruit fly).